The primary structure comprises 453 residues: RuvB-like helicase 1 (453 aa).

An ATP-binding site is contributed by 71 to 78 (GGPGTGKT).

It belongs to the RuvB family. As to quaternary structure, may form heterododecamers with RVB2. Component of the SWR1 chromatin remodeling complex, the INO80 chromatin remodeling complex, and of the R2TP complex.

The protein localises to the nucleus. It catalyses the reaction ATP + H2O = ADP + phosphate + H(+). Functionally, DNA helicase which participates in several chromatin remodeling complexes, including the SWR1 and the INO80 complexes. The SWR1 complex mediates the ATP-dependent exchange of histone H2A for the H2A variant HZT1 leading to transcriptional regulation of selected genes by chromatin remodeling. The INO80 complex remodels chromatin by shifting nucleosomes and is involved in DNA repair. Also involved in pre-rRNA processing. The chain is RuvB-like helicase 1 (RVB1) from Yarrowia lipolytica (strain CLIB 122 / E 150) (Yeast).